Reading from the N-terminus, the 702-residue chain is Polyribonucleotide nucleotidyltransferase 2 (702 aa).

Asp483 and Asp489 together coordinate Mg(2+). The region spanning 550–609 (PQVTKLKVHPDKVREVIGAGGKVINKIIDETGVKINIENDGTIYIAAPDQESARVALEMI) is the KH domain. The S1 motif domain occupies 619–687 (GEVYTGKVIK…PQGKIGLSRK (69 aa)).

The protein belongs to the polyribonucleotide nucleotidyltransferase family. It depends on Mg(2+) as a cofactor.

The protein resides in the cytoplasm. It catalyses the reaction RNA(n+1) + phosphate = RNA(n) + a ribonucleoside 5'-diphosphate. Functionally, involved in mRNA degradation. Catalyzes the phosphorolysis of single-stranded polyribonucleotides processively in the 3'- to 5'-direction. This Alkaliphilus metalliredigens (strain QYMF) protein is Polyribonucleotide nucleotidyltransferase 2.